Reading from the N-terminus, the 504-residue chain is Maturase K (504 aa).

The protein belongs to the intron maturase 2 family. MatK subfamily.

The protein localises to the plastid. The protein resides in the chloroplast. Usually encoded in the trnK tRNA gene intron. Probably assists in splicing its own and other chloroplast group II introns. In Nepenthes distillatoria (Pitcher plant), this protein is Maturase K.